The chain runs to 766 residues: Serine/threonine-protein kinase tousled-like 1 (766 aa).

Residues 1 to 198 (MSVQSSSGSL…PSPTALAFGD (198 aa)) are disordered. Low complexity predominate over residues 20–33 (STSPTPGSAAAARS). A Phosphothreonine modification is found at threonine 38. Residues 43-64 (RPREGAMDELHSLDPRRQELLE) are compositionally biased toward basic and acidic residues. Residues serine 54, serine 77, and serine 80 each carry the phosphoserine modification. Residues 68–85 (TGVATGSTGSTGSCSVGA) show a composition bias toward low complexity. Positions 87-103 (ASTNNESSNHSFGSLGS) are enriched in polar residues. Residues 105–121 (SDKESETPEKKQSESSR) are compositionally biased toward basic and acidic residues. Phosphoserine occurs at positions 134, 159, 174, and 176. The span at 170–192 (SPQNSHSHSTPSSSVRPNSPSPT) shows a compositional bias: low complexity. Residues 229–280 (NQDLEKKEGRIDDLLRANCDLRRQIDDQQKLLEKYKERLNKCISMSKKLLIE) adopt a coiled-coil conformation. The interval 344 to 381 (KLLGKRKPPTANNSQAPATNSEAKQRKTKAVNGAENDP) is disordered. A compositionally biased stretch (polar residues) spans 353-365 (TANNSQAPATNSE). Residues 397–445 (HEQEEIFKLRLGHLKKEEAEIQAELERLERVRNLHIRELKRINNEDNSQ) adopt a coiled-coil conformation. A Protein kinase domain is found at 456–734 (YLLLHLLGRG…VHQLANDPYL (279 aa)). Residues 462 to 470 (LGRGGFSEV) and lysine 485 each bind ATP. The active-site Proton acceptor is aspartate 586. Position 743 is a phosphoserine (serine 743). A disordered region spans residues 745–766 (GNLHMSGLTATPTPPSSSIITY).

It belongs to the protein kinase superfamily. Ser/Thr protein kinase family. In terms of assembly, heterodimer with TLK2. Mg(2+) is required as a cofactor. Ubiquitously expressed in all tissues examined.

It is found in the nucleus. It catalyses the reaction L-seryl-[protein] + ATP = O-phospho-L-seryl-[protein] + ADP + H(+). It carries out the reaction L-threonyl-[protein] + ATP = O-phospho-L-threonyl-[protein] + ADP + H(+). With respect to regulation, cell-cycle regulated, maximal activity in S-phase. Inactivated by phosphorylation at Ser-743, potentially by CHEK1. Its function is as follows. Rapidly and transiently inhibited by phosphorylation following the generation of DNA double-stranded breaks during S-phase. This is cell cycle checkpoint and ATM-pathway dependent and appears to regulate processes involved in chromatin assembly. Isoform 3 protects the cells from the ionizing radiation by facilitating the repair of DSBs. In vitro, phosphorylates histone H3 at 'Ser-10'. The sequence is that of Serine/threonine-protein kinase tousled-like 1 (Tlk1) from Mus musculus (Mouse).